Reading from the N-terminus, the 505-residue chain is Probable glycine dehydrogenase (decarboxylating) subunit 2 (505 aa).

Lysine 274 carries the N6-(pyridoxal phosphate)lysine modification.

It belongs to the GcvP family. C-terminal subunit subfamily. In terms of assembly, the glycine cleavage system is composed of four proteins: P, T, L and H. In this organism, the P 'protein' is a heterodimer of two subunits. Pyridoxal 5'-phosphate serves as cofactor.

The catalysed reaction is N(6)-[(R)-lipoyl]-L-lysyl-[glycine-cleavage complex H protein] + glycine + H(+) = N(6)-[(R)-S(8)-aminomethyldihydrolipoyl]-L-lysyl-[glycine-cleavage complex H protein] + CO2. Its function is as follows. The glycine cleavage system catalyzes the degradation of glycine. The P protein binds the alpha-amino group of glycine through its pyridoxal phosphate cofactor; CO(2) is released and the remaining methylamine moiety is then transferred to the lipoamide cofactor of the H protein. The sequence is that of Probable glycine dehydrogenase (decarboxylating) subunit 2 from Sulfurisphaera tokodaii (strain DSM 16993 / JCM 10545 / NBRC 100140 / 7) (Sulfolobus tokodaii).